The primary structure comprises 306 residues: BRCA2 and CDKN1A-interacting protein (306 aa).

Positions 1–10 (MASRPKRRAV) are enriched in basic residues. Residues 1-45 (MASRPKRRAVSRVPPALGDEEEEDEVEEQDEDDSDEEEDEEDEVV) are disordered. Residues 18-45 (GDEEEEDEVEEQDEDDSDEEEDEEDEVV) show a composition bias toward acidic residues. 2 positions are modified to phosphoserine: serine 34 and serine 104. The tract at residues 51–159 (IEFEAYSISD…EKSMVEQLDR (109 aa)) is interaction with BRCA2. Residues 153 to 251 (MVEQLDRLFN…NAEEEFFYEK (99 aa)) are interaction with CDKN1A. Serine 273 carries the post-translational modification Phosphoserine.

The protein belongs to the BCP1 family. As to quaternary structure, interacts with BRCA2, CDKN1A and MTDH/LYRIC. Interacts with DCTN1/p150-glued and ACTR1A/ARP1. Interacts with alpha-, beta- and gamma-tubulins. Interacts with TENT5C; the interaction has no effect on TENT5C poly(A) polymerase function.

It localises to the nucleus. The protein resides in the cytoplasm. The protein localises to the cytoskeleton. Its subcellular location is the microtubule organizing center. It is found in the centrosome. It localises to the centriole. The protein resides in the spindle pole. Its function is as follows. During interphase, required for microtubule organizing and anchoring activities. During mitosis, required for the organization and stabilization of the spindle pole. May promote cell cycle arrest by enhancing the inhibition of CDK2 activity by CDKN1A. May be required for repair of DNA damage by homologous recombination in conjunction with BRCA2. May not be involved in non-homologous end joining (NHEJ). The polypeptide is BRCA2 and CDKN1A-interacting protein (BCCIP) (Bos taurus (Bovine)).